Consider the following 260-residue polypeptide: ATP-dependent zinc metalloprotease FTSH, chloroplastic (260 aa).

Residue histidine 219 participates in Zn(2+) binding. The active site involves glutamate 220. Histidine 223 lines the Zn(2+) pocket.

The protein in the N-terminal section; belongs to the AAA ATPase family. It in the C-terminal section; belongs to the peptidase M41 family. Requires Zn(2+) as cofactor.

The protein resides in the plastid. The protein localises to the chloroplast thylakoid membrane. Probable ATP-dependent zinc metallopeptidase. This Helianthus annuus (Common sunflower) protein is ATP-dependent zinc metalloprotease FTSH, chloroplastic.